Reading from the N-terminus, the 218-residue chain is Ribose-5-phosphate isomerase A (218 aa).

Substrate contacts are provided by residues Thr-28 to Thr-31, Asp-81 to Asp-84, and Lys-94 to Gly-97. Glu-103 functions as the Proton acceptor in the catalytic mechanism. Residue Lys-121 participates in substrate binding.

Belongs to the ribose 5-phosphate isomerase family. As to quaternary structure, homodimer.

The enzyme catalyses aldehydo-D-ribose 5-phosphate = D-ribulose 5-phosphate. Its pathway is carbohydrate degradation; pentose phosphate pathway; D-ribose 5-phosphate from D-ribulose 5-phosphate (non-oxidative stage): step 1/1. Functionally, catalyzes the reversible conversion of ribose-5-phosphate to ribulose 5-phosphate. This Shewanella woodyi (strain ATCC 51908 / MS32) protein is Ribose-5-phosphate isomerase A.